The sequence spans 171 residues: Deoxyuridine 5'-triphosphate nucleotidohydrolase (171 aa).

Mg(2+) is bound at residue Glu143.

Belongs to the dUTPase family. Homotrimer. Requires Mg(2+) as cofactor.

The catalysed reaction is dUTP + H2O = dUMP + diphosphate + H(+). It participates in pyrimidine metabolism; dUMP biosynthesis; dUMP from dCTP (dUTP route): step 2/2. This enzyme is involved in nucleotide metabolism: it produces dUMP, the immediate precursor of thymidine nucleotides and it decreases the intracellular concentration of dUTP, preventing uracil incorporation into DNA. This chain is Deoxyuridine 5'-triphosphate nucleotidohydrolase (DUT), found in Oryza sativa subsp. japonica (Rice).